We begin with the raw amino-acid sequence, 428 residues long: Nuclear hormone receptor family member nhr-44 (428 aa).

Positions 21-98 (SEKCLVCFQP…LGMKPDNIQR (78 aa)) form a DNA-binding region, nuclear receptor. NR C4-type zinc fingers lie at residues 24–44 (CLVC…CRAC) and 61–86 (CREG…SDKC). The NR LBD domain occupies 181-427 (SLEQLAFGLQ…LSHPEMFQFS (247 aa)).

This sequence belongs to the nuclear hormone receptor family.

The protein resides in the nucleus. Its function is as follows. Orphan nuclear receptor. This Caenorhabditis elegans protein is Nuclear hormone receptor family member nhr-44 (nhr-44).